Here is a 500-residue protein sequence, read N- to C-terminus: Probable trehalose-phosphate phosphatase 8 (500 aa).

This sequence belongs to the trehalose phosphatase family. Requires a divalent metal cation as cofactor.

It carries out the reaction alpha,alpha-trehalose 6-phosphate + H2O = alpha,alpha-trehalose + phosphate. It functions in the pathway glycan biosynthesis; trehalose biosynthesis. Its function is as follows. Removes the phosphate from trehalose 6-phosphate to produce free trehalose. Trehalose accumulation in plant may improve abiotic stress tolerance. This is Probable trehalose-phosphate phosphatase 8 (TPP8) from Oryza sativa subsp. japonica (Rice).